The chain runs to 130 residues: MSKKVVSTTTAPKALGPYSQAILNDNTLYISGQIGIDPETDEFAGATTAEQAHQIFDNIDNILHEAEFSRNDIVKAALFFDDIADFALVNDIYAQYFDTTSVEEFPARSAVQVAALPKNAKLEIEITAMK.

This sequence belongs to the RutC family.

The chain is RutC family protein in leuC 5'region from Leuconostoc mesenteroides subsp. cremoris.